Consider the following 235-residue polypeptide: Small ribosomal subunit protein uS2c (235 aa).

This sequence belongs to the universal ribosomal protein uS2 family.

Its subcellular location is the plastid. In Euglena longa (Euglenophycean alga), this protein is Small ribosomal subunit protein uS2c (rps2).